The following is a 256-amino-acid chain: MTEWQAVVLGIVEGISEFLPISSTGHLILTAHILGIKHTDFVKSFEISIQLGSILAVVVLYFNRLIRDYEIWKRIIAAFIPTGIIGFLLYKLIKGFLIGNDLVVVVSLILGGIILIFADTYCEKFCYLGDVRELPLRKAFMIGVFQSIAVIPGVSRSGSTIIGGMLMGLNRKVAAEFSFLLAIPTMFAATTYDLIKSGGSFNAQEWNILIIGFITSFITALIVVKWFLNFLKSHSLKIFGFYRILIGLVYAAFFLF.

Transmembrane regions (helical) follow at residues 8–28, 41–61, 75–95, 96–116, 175–195, 208–228, and 236–256; these read VLGI…GHLI, FVKS…VVLY, IIAA…LIKG, FLIG…IILI, AEFS…YDLI, ILII…KWFL, and LKIF…FFLF.

Belongs to the UppP family.

The protein resides in the cell inner membrane. The enzyme catalyses di-trans,octa-cis-undecaprenyl diphosphate + H2O = di-trans,octa-cis-undecaprenyl phosphate + phosphate + H(+). Its function is as follows. Catalyzes the dephosphorylation of undecaprenyl diphosphate (UPP). Confers resistance to bacitracin. This chain is Undecaprenyl-diphosphatase, found in Aquifex aeolicus (strain VF5).